We begin with the raw amino-acid sequence, 287 residues long: Polyamine aminopropyltransferase (287 aa).

The PABS domain maps to 5 to 238; sequence EIWYETLHAN…GIMTFAWASQ (234 aa). Q33 serves as a coordination point for S-methyl-5'-thioadenosine. Residues H64 and D88 each coordinate spermidine. Residues E108 and 140–141 each bind S-methyl-5'-thioadenosine; that span reads DG. The active-site Proton acceptor is D158. Position 158–161 (158–161) interacts with spermidine; it reads DCTD. P165 contributes to the S-methyl-5'-thioadenosine binding site.

This sequence belongs to the spermidine/spermine synthase family. Homodimer or homotetramer.

The protein resides in the cytoplasm. The enzyme catalyses S-adenosyl 3-(methylsulfanyl)propylamine + putrescine = S-methyl-5'-thioadenosine + spermidine + H(+). Its pathway is amine and polyamine biosynthesis; spermidine biosynthesis; spermidine from putrescine: step 1/1. Catalyzes the irreversible transfer of a propylamine group from the amino donor S-adenosylmethioninamine (decarboxy-AdoMet) to putrescine (1,4-diaminobutane) to yield spermidine. The chain is Polyamine aminopropyltransferase from Serratia proteamaculans (strain 568).